The sequence spans 562 residues: MDDNKRPLYLPFAGPAILEAPLINKGSAFSEEERIFFNLEGLVPYAIETIEEQASRAYDQFRSFNNDLDKHIYLRNIQDTNETLFYRLVQNNISEMMPIIYTPTVGLACERFSKNYRRNRGLFISYPNKDRIDDILNNSTRQKVKIIVVTDGERILGLGDQGIGGMGIPIGKLSLYTSCGGISPAYTLPITLDVGTDNPQLLEDPMYMGWRHPRIGGEEYAEFIEAFMQAVHVRWPDTLIQFEDFAQKNAMPILERYKDRYCCFNDDIQGTAAVAVGCLLAACKAAGTELNQQRIAFLGAGSAGCGIAEAIVAQMVSEGISDEQARTQVCMVDRWGLLLDNMPNLLPFQQKLAQKCANIQNWNNFSDNISLLDVVNNAKPTVLIGVSGVPGLFTEEIIRAMHSHCARPIIFPMSNPTSRVEATPKDILHWTSGQALVATGSPFEPVVVDGETYEIAQCNNSFIFPGIGLGVLASGARHVSDAMLMASSRALAECSPLAIDGTGPLLPKLEDIHAVSKHIAFAVGKVAVEQGLTLPMSDEILQQSIEGNFWKPEYRRYKRTSF.

Tyr101 (proton donor) is an active-site residue. An NAD(+)-binding site is contributed by Arg154. Lys172 serves as the catalytic Proton acceptor. 3 residues coordinate a divalent metal cation: Glu243, Asp244, and Asp267. NAD(+) is bound by residues Asp267 and Asn415.

This sequence belongs to the malic enzymes family. In terms of assembly, homotetramer. Mg(2+) serves as cofactor. The cofactor is Mn(2+).

The enzyme catalyses (S)-malate + NAD(+) = pyruvate + CO2 + NADH. It catalyses the reaction oxaloacetate + H(+) = pyruvate + CO2. This is NAD-dependent malic enzyme from Shewanella putrefaciens (strain CN-32 / ATCC BAA-453).